The chain runs to 166 residues: Phospholipase A2 inhibitor A4/A5 (166 aa).

A signal peptide spans 1–19; it reads MRLILLSGLLLLGTFLVNG. Residues 46 to 161 enclose the C-type lectin domain; it reads LFHAFLTVHK…CDDNLLVVCE (116 aa). Disulfide bonds link C83–C160 and C138–C152. N-linked (GlcNAc...) asparagine glycosylation occurs at N122.

It belongs to the alpha-type phospholipase A2 inhibitor family. In terms of assembly, homotrimer; non-covalently linked. In terms of tissue distribution, expressed by the liver.

The protein resides in the secreted. This phospholipase A2 inhibitor binds directly phospholipase A2 in the presence or absence of calcium. The protein is Phospholipase A2 inhibitor A4/A5 of Crotalus durissus terrificus (South American rattlesnake).